The sequence spans 309 residues: MADLQATLDSIYADIQPRIGEGKVADYIPELAKVDPQQFGMAIVTVDGKVYRVGNADTAFSIQSISKVFMLTLALGKVGEGLWKRVGREPSGSAFNSIVQLEHESGIPRNPFINAGAIAVSDVVMAGHAPREAIGELLRFVRYLADDESITIDDKVARSETQTGYRNFALANFMRAYRNLDHPVDHVLGVYFHQCALSMSCEQLARAGLFLAARGSNPTTGHSVVSPKRARRINALMLTCGHYDGSGDFAYHVGLPGKSGVGGGIFAVAPGIASIAVWSPGLNKVGNSQLGAAALEMLAARTGWSVFGD.

S64, N114, E160, N167, Y191, Y243, and V261 together coordinate substrate.

Belongs to the glutaminase family. As to quaternary structure, homotetramer.

The enzyme catalyses L-glutamine + H2O = L-glutamate + NH4(+). The sequence is that of Glutaminase from Rhizobium johnstonii (strain DSM 114642 / LMG 32736 / 3841) (Rhizobium leguminosarum bv. viciae).